The primary structure comprises 463 residues: Tryprostatin B synthase (463 aa).

Residues M93 and E101 each contribute to the brevianamide F site. Dimethylallyl diphosphate is bound by residues R112, K200, and Y202. Y204 provides a ligand contact to brevianamide F. 6 residues coordinate dimethylallyl diphosphate: K293, Y295, Q379, Y381, Y445, and Y449.

Belongs to the tryptophan dimethylallyltransferase family.

The enzyme catalyses brevianamide F + dimethylallyl diphosphate = tryprostatin B + diphosphate. It participates in mycotoxin biosynthesis. Functionally, brevianamide F prenyltransferase; part of the gene cluster that mediates the biosynthesis of fumitremorgins, indole alkaloids that carry not only intriguing chemical structures, but also interesting biological and pharmacological activities. The biosynthesis of fumitremorgin-type alkaloids begins by condensation of the two amino acids L-tryptophan and L-proline to brevianamide F, catalyzed by the non-ribosomal peptide synthetase ftmPS/ftmA. Brevianamide F is then prenylated by the prenyltransferase ftmPT1/ftmB in the presence of dimethylallyl diphosphate, resulting in the formation of tryprostatin B. The three cytochrome P450 monooxygenases, ftmP450-1/ftmC, ftmP450-2/ftmE and ftmP450-3/FtmG, are responsible for the conversion of tryprostatin B to 6-hydroxytryprostatin B, tryprostatin A to fumitremorgin C and fumitremorgin C to 12,13-dihydroxyfumitremorgin C, respectively. The putative methyltransferase ftmMT/ftmD is expected for the conversion of 6-hydroxytryprostatin B to tryprostatin A. FtmPT2/FtmH catalyzes the prenylation of 12,13-dihydroxyfumitre-morgin C in the presence of dimethylallyl diphosphate, resulting in the formation of fumitremorgin B. Fumitremorgin B is further converted to verruculogen by ftmOx1/ftmF via the insertion of an endoperoxide bond between the two prenyl moieties. Finally, verruculogen is further converted to fumitremorgin A by the verruculogen prenyltransferase ftmPT3. This Neosartorya fischeri (strain ATCC 1020 / DSM 3700 / CBS 544.65 / FGSC A1164 / JCM 1740 / NRRL 181 / WB 181) (Aspergillus fischerianus) protein is Tryprostatin B synthase.